The primary structure comprises 446 residues: Histidine--tRNA ligase (446 aa).

It belongs to the class-II aminoacyl-tRNA synthetase family. Homodimer.

The protein resides in the cytoplasm. It carries out the reaction tRNA(His) + L-histidine + ATP = L-histidyl-tRNA(His) + AMP + diphosphate + H(+). The sequence is that of Histidine--tRNA ligase from Burkholderia pseudomallei (strain 668).